The sequence spans 517 residues: Crotonobetaine/carnitine--CoA ligase (517 aa).

Belongs to the ATP-dependent AMP-binding enzyme family.

The catalysed reaction is 4-(trimethylamino)butanoate + ATP + CoA = 4-(trimethylamino)butanoyl-CoA + AMP + diphosphate. It carries out the reaction crotonobetaine + ATP + CoA = crotonobetainyl-CoA + AMP + diphosphate. The enzyme catalyses (R)-carnitine + ATP + CoA = (R)-carnitinyl-CoA + AMP + diphosphate. The protein operates within amine and polyamine metabolism; carnitine metabolism. In terms of biological role, catalyzes the transfer of CoA to carnitine, generating the initial carnitinyl-CoA needed for the CaiB reaction cycle. Also has activity toward crotonobetaine and gamma-butyrobetaine. This chain is Crotonobetaine/carnitine--CoA ligase, found in Escherichia coli O127:H6 (strain E2348/69 / EPEC).